The sequence spans 200 residues: Small ribosomal subunit protein uS4 (200 aa).

Residues 22 to 43 form a disordered region; it reads TGKELERRPYAPGQHGPTQRKK. The S4 RNA-binding domain occupies 92–170; it reads QRLDNIVYRL…VPEYVTFDAE (79 aa).

This sequence belongs to the universal ribosomal protein uS4 family. Part of the 30S ribosomal subunit. Contacts protein S5. The interaction surface between S4 and S5 is involved in control of translational fidelity.

In terms of biological role, one of the primary rRNA binding proteins, it binds directly to 16S rRNA where it nucleates assembly of the body of the 30S subunit. Its function is as follows. With S5 and S12 plays an important role in translational accuracy. In Listeria monocytogenes serotype 4b (strain F2365), this protein is Small ribosomal subunit protein uS4.